We begin with the raw amino-acid sequence, 116 residues long: CDKN2AIP N-terminal-like protein (116 aa).

N-acetylmethionine is present on methionine 1. The region spanning 24–116 is the XRN2-binding (XTBD) domain; the sequence is AEQFRSYSES…RSELMRKHQS (93 aa).

This sequence belongs to the CARF family. In terms of assembly, interacts with XRN2; the interaction is direct.

The chain is CDKN2AIP N-terminal-like protein (Cdkn2aipnl) from Mus musculus (Mouse).